A 230-amino-acid polypeptide reads, in one-letter code: Broad specificity amino-acid racemase YgeA (230 aa).

Residues Met-10, Gln-52, and 83–85 each bind substrate; that span reads TNT. The active-site Proton donor is Thr-83. Cys-197 acts as the Proton acceptor in catalysis. Residue 198 to 199 participates in substrate binding; sequence TE.

Belongs to the aspartate/glutamate racemases family.

It carries out the reaction an L-alpha-amino acid = a D-alpha-amino acid. The enzyme catalyses L-homoserine = D-homoserine. Its function is as follows. Amino-acid racemase able to utilize a broad range of substrates. Highest activity is observed with L-homoserine and D-homoserine. Has tenfold lower activity against L-methionine, L-leucine, L-valine and L-histidine. Has low activity with L-norvaline, L-asparagine, D-methionine, L-aminobutyric acid, L-isoleucine, L-serine, L-norleucine, L-alanine, L-glutamine, LL-diaminopimelic acid and L-phenylalanine. Has no activity against ten L-amino acids (Thr, Glu, Asp, Arg, Lys, Tyr, Trp, Orn, Cit and Aad). D-amino acids might be used as components of peptidoglycan and/or be involved in peptidoglycan metabolism and remodeling. This is Broad specificity amino-acid racemase YgeA (ygeA) from Escherichia coli (strain K12).